The chain runs to 309 residues: Homoserine O-succinyltransferase (309 aa).

Residue Cys142 is the Acyl-thioester intermediate of the active site. Substrate contacts are provided by Lys163 and Ser192. His235 acts as the Proton acceptor in catalysis. Residue Glu237 is part of the active site. Arg249 serves as a coordination point for substrate.

It belongs to the MetA family.

The protein resides in the cytoplasm. It carries out the reaction L-homoserine + succinyl-CoA = O-succinyl-L-homoserine + CoA. The protein operates within amino-acid biosynthesis; L-methionine biosynthesis via de novo pathway; O-succinyl-L-homoserine from L-homoserine: step 1/1. In terms of biological role, transfers a succinyl group from succinyl-CoA to L-homoserine, forming succinyl-L-homoserine. In Edwardsiella ictaluri (strain 93-146), this protein is Homoserine O-succinyltransferase.